We begin with the raw amino-acid sequence, 498 residues long: Protein nucleotidyltransferase YdiU (498 aa).

Positions 88, 90, 91, 111, 123, 124, 174, and 181 each coordinate ATP. D250 functions as the Proton acceptor in the catalytic mechanism. Residues N251 and D260 each coordinate Mg(2+). D260 contacts ATP.

The protein belongs to the SELO family. Mg(2+) is required as a cofactor. The cofactor is Mn(2+).

It carries out the reaction L-seryl-[protein] + ATP = 3-O-(5'-adenylyl)-L-seryl-[protein] + diphosphate. The enzyme catalyses L-threonyl-[protein] + ATP = 3-O-(5'-adenylyl)-L-threonyl-[protein] + diphosphate. The catalysed reaction is L-tyrosyl-[protein] + ATP = O-(5'-adenylyl)-L-tyrosyl-[protein] + diphosphate. It catalyses the reaction L-histidyl-[protein] + UTP = N(tele)-(5'-uridylyl)-L-histidyl-[protein] + diphosphate. It carries out the reaction L-seryl-[protein] + UTP = O-(5'-uridylyl)-L-seryl-[protein] + diphosphate. The enzyme catalyses L-tyrosyl-[protein] + UTP = O-(5'-uridylyl)-L-tyrosyl-[protein] + diphosphate. Functionally, nucleotidyltransferase involved in the post-translational modification of proteins. It can catalyze the addition of adenosine monophosphate (AMP) or uridine monophosphate (UMP) to a protein, resulting in modifications known as AMPylation and UMPylation. The protein is Protein nucleotidyltransferase YdiU of Methylorubrum populi (strain ATCC BAA-705 / NCIMB 13946 / BJ001) (Methylobacterium populi).